Here is a 398-residue protein sequence, read N- to C-terminus: 1-deoxy-D-xylulose 5-phosphate reductoisomerase (398 aa).

Residues Thr-10, Gly-11, Ser-12, Ile-13, Gly-36, Lys-37, Asn-38, and Asn-124 each coordinate NADPH. Lys-125 contributes to the 1-deoxy-D-xylulose 5-phosphate binding site. Glu-126 contributes to the NADPH binding site. Residue Asp-150 coordinates Mn(2+). Residues Ser-151, Glu-152, Ser-186, and His-209 each coordinate 1-deoxy-D-xylulose 5-phosphate. Residue Glu-152 participates in Mn(2+) binding. Gly-215 contributes to the NADPH binding site. The 1-deoxy-D-xylulose 5-phosphate site is built by Ser-222, Asn-227, Lys-228, and Glu-231. Residue Glu-231 participates in Mn(2+) binding.

Belongs to the DXR family. As to quaternary structure, homodimer. Mg(2+) serves as cofactor. The cofactor is Mn(2+).

It catalyses the reaction 2-C-methyl-D-erythritol 4-phosphate + NADP(+) = 1-deoxy-D-xylulose 5-phosphate + NADPH + H(+). It participates in isoprenoid biosynthesis; isopentenyl diphosphate biosynthesis via DXP pathway; isopentenyl diphosphate from 1-deoxy-D-xylulose 5-phosphate: step 1/6. In terms of biological role, catalyzes the NADPH-dependent rearrangement and reduction of 1-deoxy-D-xylulose-5-phosphate (DXP) to 2-C-methyl-D-erythritol 4-phosphate (MEP). In Shigella flexneri, this protein is 1-deoxy-D-xylulose 5-phosphate reductoisomerase.